A 483-amino-acid polypeptide reads, in one-letter code: Siroheme synthase (483 aa).

The segment at 1 to 203 (MNYFPIFANL…RQNTLAEREL (203 aa)) is precorrin-2 dehydrogenase /sirohydrochlorin ferrochelatase. NAD(+) is bound by residues 22–23 (AV) and 43–44 (KH). A Phosphoserine modification is found at serine 128. The tract at residues 217–483 (GSVSLVGAGP…GGLNAGQRAA (267 aa)) is uroporphyrinogen-III C-methyltransferase. Residue proline 226 participates in S-adenosyl-L-methionine binding. The Proton acceptor role is filled by aspartate 249. Lysine 271 acts as the Proton donor in catalysis. S-adenosyl-L-methionine-binding positions include 302–304 (GGD), valine 307, 332–333 (TA), methionine 384, and glycine 413.

In the N-terminal section; belongs to the precorrin-2 dehydrogenase / sirohydrochlorin ferrochelatase family. It in the C-terminal section; belongs to the precorrin methyltransferase family.

The catalysed reaction is uroporphyrinogen III + 2 S-adenosyl-L-methionine = precorrin-2 + 2 S-adenosyl-L-homocysteine + H(+). It carries out the reaction precorrin-2 + NAD(+) = sirohydrochlorin + NADH + 2 H(+). The enzyme catalyses siroheme + 2 H(+) = sirohydrochlorin + Fe(2+). It participates in cofactor biosynthesis; adenosylcobalamin biosynthesis; precorrin-2 from uroporphyrinogen III: step 1/1. Its pathway is cofactor biosynthesis; adenosylcobalamin biosynthesis; sirohydrochlorin from precorrin-2: step 1/1. The protein operates within porphyrin-containing compound metabolism; siroheme biosynthesis; precorrin-2 from uroporphyrinogen III: step 1/1. It functions in the pathway porphyrin-containing compound metabolism; siroheme biosynthesis; siroheme from sirohydrochlorin: step 1/1. It participates in porphyrin-containing compound metabolism; siroheme biosynthesis; sirohydrochlorin from precorrin-2: step 1/1. Its function is as follows. Multifunctional enzyme that catalyzes the SAM-dependent methylations of uroporphyrinogen III at position C-2 and C-7 to form precorrin-2 via precorrin-1. Then it catalyzes the NAD-dependent ring dehydrogenation of precorrin-2 to yield sirohydrochlorin. Finally, it catalyzes the ferrochelation of sirohydrochlorin to yield siroheme. In Neisseria meningitidis serogroup B (strain ATCC BAA-335 / MC58), this protein is Siroheme synthase.